Here is a 423-residue protein sequence, read N- to C-terminus: Protein CLP1 homolog (423 aa).

Residues Glu-16, Lys-57, and 119–124 each bind ATP; that span reads DVGKST.

It belongs to the Clp1 family. Clp1 subfamily.

The protein resides in the nucleus. Functionally, required for endonucleolytic cleavage during polyadenylation-dependent pre-mRNA 3'-end formation. The polypeptide is Protein CLP1 homolog (cbc) (Drosophila melanogaster (Fruit fly)).